We begin with the raw amino-acid sequence, 744 residues long: TonB-dependent heme receptor A (744 aa).

The N-terminal stretch at 1-24 is a signal peptide; it reads MNILINKRIFLLVTLVGIQLNVTA. The region spanning 45–157 is the TBDR plug domain; it reads DDSNKLPGRS…FAGTVKFETK (113 aa). The 577-residue stretch at 168–744 folds into the TBDR beta-barrel domain; it reads KIGGFLKYGN…NIKFSLSQKF (577 aa).

The protein belongs to the TonB-dependent receptor family.

The protein localises to the cell outer membrane. Functionally, heme receptor. The sequence is that of TonB-dependent heme receptor A (tdhA) from Haemophilus influenzae (strain ATCC 51907 / DSM 11121 / KW20 / Rd).